The following is a 233-amino-acid chain: Orotidine 5'-phosphate decarboxylase (233 aa).

Residues Asp11, Lys33, 60–69 (DLKFHDIPNT), Thr120, Arg181, Gln190, Gly210, and Arg211 each bind substrate. Lys62 functions as the Proton donor in the catalytic mechanism.

This sequence belongs to the OMP decarboxylase family. Type 1 subfamily. As to quaternary structure, homodimer.

The enzyme catalyses orotidine 5'-phosphate + H(+) = UMP + CO2. Its pathway is pyrimidine metabolism; UMP biosynthesis via de novo pathway; UMP from orotate: step 2/2. In terms of biological role, catalyzes the decarboxylation of orotidine 5'-monophosphate (OMP) to uridine 5'-monophosphate (UMP). The polypeptide is Orotidine 5'-phosphate decarboxylase (Vibrio campbellii (strain ATCC BAA-1116)).